The sequence spans 81 residues: Large ribosomal subunit protein uL23 (81 aa).

It belongs to the universal ribosomal protein uL23 family. Part of the 50S ribosomal subunit. Contacts protein L29.

Its function is as follows. Binds to 23S rRNA. One of the proteins that surrounds the polypeptide exit tunnel on the outside of the ribosome. This chain is Large ribosomal subunit protein uL23, found in Saccharolobus solfataricus (strain ATCC 35092 / DSM 1617 / JCM 11322 / P2) (Sulfolobus solfataricus).